Here is a 394-residue protein sequence, read N- to C-terminus: Chaperone protein DnaJ (394 aa).

The region spanning 5 to 75 (DYYEVLGVDK…EKKQQYDQFG (71 aa)) is the J domain. The CR-type zinc-finger motif lies at 150–231 (GVEKTIKYKR…CRGTGTAKET (82 aa)). Residues Cys163, Cys166, Cys179, Cys182, Cys205, Cys208, Cys219, and Cys222 each contribute to the Zn(2+) site. CXXCXGXG motif repeat units follow at residues 163-170 (CEHCHGTG), 179-186 (CPTCNGQG), 205-212 (CPDCHGTG), and 219-226 (CKHCRGTG).

It belongs to the DnaJ family. As to quaternary structure, homodimer. Requires Zn(2+) as cofactor.

Its subcellular location is the cytoplasm. Functionally, participates actively in the response to hyperosmotic and heat shock by preventing the aggregation of stress-denatured proteins and by disaggregating proteins, also in an autonomous, DnaK-independent fashion. Unfolded proteins bind initially to DnaJ; upon interaction with the DnaJ-bound protein, DnaK hydrolyzes its bound ATP, resulting in the formation of a stable complex. GrpE releases ADP from DnaK; ATP binding to DnaK triggers the release of the substrate protein, thus completing the reaction cycle. Several rounds of ATP-dependent interactions between DnaJ, DnaK and GrpE are required for fully efficient folding. Also involved, together with DnaK and GrpE, in the DNA replication of plasmids through activation of initiation proteins. The sequence is that of Chaperone protein DnaJ from Fusobacterium nucleatum subsp. polymorphum (Fusobacterium polymorphum).